The following is a 294-amino-acid chain: Extracellular metalloprotease TRV_07111 (294 aa).

Positions 1–19 are cleaved as a signal peptide; sequence MRFSVVFAAIAALSSVVTA. Asparagine 49, asparagine 54, and asparagine 74 each carry an N-linked (GlcNAc...) asparagine glycan. Residue histidine 185 coordinates Zn(2+). Residue glutamate 186 is part of the active site. Histidine 189 is a Zn(2+) binding site. A disulfide bond links cysteine 224 and cysteine 250.

Belongs to the peptidase M43B family.

The protein localises to the secreted. In terms of biological role, secreted metalloproteinase that allows assimilation of proteinaceous substrates. Plays a pivotal role as a pathogenicity determinant during infections and contributes to the ability of the pathogen to persist within the mammalian host. The polypeptide is Extracellular metalloprotease TRV_07111 (Trichophyton verrucosum (strain HKI 0517)).